The following is a 292-amino-acid chain: 4-diphosphocytidyl-2-C-methyl-D-erythritol kinase (292 aa).

Residue Lys-20 is part of the active site. 103 to 113 (PMGGGIGGGSS) serves as a coordination point for ATP. Residue Asp-145 is part of the active site.

This sequence belongs to the GHMP kinase family. IspE subfamily.

It catalyses the reaction 4-CDP-2-C-methyl-D-erythritol + ATP = 4-CDP-2-C-methyl-D-erythritol 2-phosphate + ADP + H(+). It functions in the pathway isoprenoid biosynthesis; isopentenyl diphosphate biosynthesis via DXP pathway; isopentenyl diphosphate from 1-deoxy-D-xylulose 5-phosphate: step 3/6. Its function is as follows. Catalyzes the phosphorylation of the position 2 hydroxy group of 4-diphosphocytidyl-2C-methyl-D-erythritol. This Cupriavidus metallidurans (strain ATCC 43123 / DSM 2839 / NBRC 102507 / CH34) (Ralstonia metallidurans) protein is 4-diphosphocytidyl-2-C-methyl-D-erythritol kinase.